A 330-amino-acid polypeptide reads, in one-letter code: Delta-aminolevulinic acid dehydratase (330 aa).

Residues C122, C124, H131, and C132 each contribute to the Zn(2+) site. The Schiff-base intermediate with substrate role is filled by K199. Position 199 is an N6-succinyllysine (K199). A 5-aminolevulinate-binding site is contributed by R209. S215 is modified (phosphoserine). R221 serves as a coordination point for 5-aminolevulinate. C223 contributes to the Zn(2+) binding site. The active-site Schiff-base intermediate with substrate is K252. K252 carries the post-translational modification N6-succinyllysine. 5-aminolevulinate is bound by residues S279 and Y318.

Belongs to the ALAD family. In terms of assembly, homooctamer; active form. Homohexamer; low activity form. The cofactor is Zn(2+).

Its subcellular location is the cytoplasm. The protein resides in the cytosol. It carries out the reaction 2 5-aminolevulinate = porphobilinogen + 2 H2O + H(+). It participates in porphyrin-containing compound metabolism; protoporphyrin-IX biosynthesis; coproporphyrinogen-III from 5-aminolevulinate: step 1/4. With respect to regulation, can alternate between a fully active homooctamer and a low-activity homohexamer. A bound magnesium ion may promote the assembly of the fully active homooctamer. The magnesium-binding site is absent in the low-activity homohexamer. Inhibited by compounds that favor the hexameric state. Inhibited by divalent lead ions. The lead ions partially displace the zinc cofactor. Functionally, catalyzes an early step in the biosynthesis of tetrapyrroles. Binds two molecules of 5-aminolevulinate per subunit, each at a distinct site, and catalyzes their condensation to form porphobilinogen. The chain is Delta-aminolevulinic acid dehydratase (ALAD) from Macaca fascicularis (Crab-eating macaque).